The chain runs to 60 residues: Histidine-rich metal-binding polypeptide (60 aa).

Residues 1–60 form a disordered region; sequence MAHHEEQHGGHHHHHHHTHHHHYHGGEHHHHHHSSHHEEGCCSTSDSHHQEEGCCHGHHE. Residues 10 to 35 are compositionally biased toward basic residues; sequence GHHHHHHHTHHHHYHGGEHHHHHHSS. Over residues 36 to 60 the composition is skewed to basic and acidic residues; the sequence is HHEEGCCSTSDSHHQEEGCCHGHHE. 2 consecutive repeat copies span residues 38–42 and 51–55. A 2 X 5 AA repeats of E-E-G-C-C region spans residues 38–55; that stretch reads EEGCCSTSDSHHQEEGCC.

Functionally, strongly binds nickel and zinc. Binds other metals less strongly: cobalt &gt; copper &gt; cadmium &gt; manganese. May act to increase, or at least to preserve, urease activity. Exact function is still unknown. In Helicobacter pylori (strain J99 / ATCC 700824) (Campylobacter pylori J99), this protein is Histidine-rich metal-binding polypeptide (hpn).